We begin with the raw amino-acid sequence, 833 residues long: Serine-rich coiled-coil domain-containing protein 2 (833 aa).

Residues 178 to 208 form a disordered region; the sequence is NRSSGNVQKPRVNSCASRSSSGESLAQSPDN. Residues 191-208 show a composition bias toward polar residues; that stretch reads SCASRSSSGESLAQSPDN. Serine 222 carries the post-translational modification Phosphoserine. Disordered stretches follow at residues 321–345, 424–452, 478–508, and 602–631; these read LLKS…PADM, NRTR…FDSP, KHTS…SSDG, and DHYH…ESPL. A Phosphoserine modification is found at serine 451. Positions 496–506 are enriched in low complexity; the sequence is SSFELSPSDSS. The segment covering 606–615 has biased composition (basic residues); that stretch reads LSHPGHYHHH. Residues 711–747 adopt a coiled-coil conformation; that stretch reads DQIYKNEDLLNEITQLKEEIKKKDEKIQLLEQQLATR. The interval 789 to 833 is disordered; that stretch reads FQGMPRTVPPHRRQTSSTTAFQQPSQIYRPRPGKTNKATTYRGPQ. The segment covering 803-814 has biased composition (polar residues); the sequence is TSSTTAFQQPSQ.

Belongs to the CCSER family. Expressed in brain (at protein level).

Its subcellular location is the cytoplasm. It is found in the cytoskeleton. Functionally, microtubule-binding protein which might play a role in microtubule bundling. This chain is Serine-rich coiled-coil domain-containing protein 2 (Ccser2), found in Mus musculus (Mouse).